The chain runs to 406 residues: Formate-dependent phosphoribosylglycinamide formyltransferase (406 aa).

Residues 28 to 29 (EL) and glutamate 88 contribute to the N(1)-(5-phospho-beta-D-ribosyl)glycinamide site. ATP-binding positions include arginine 121, lysine 162, 167-172 (SSGKGQ), 202-205 (EGFI), and glutamate 210. An ATP-grasp domain is found at 126–320 (RLAAEELGCA…EFELHAKAIL (195 aa)). Residues glutamate 279 and glutamate 291 each coordinate Mg(2+). N(1)-(5-phospho-beta-D-ribosyl)glycinamide contacts are provided by residues aspartate 298, lysine 367, and 374–375 (RR).

The protein belongs to the PurK/PurT family. As to quaternary structure, homodimer.

The enzyme catalyses N(1)-(5-phospho-beta-D-ribosyl)glycinamide + formate + ATP = N(2)-formyl-N(1)-(5-phospho-beta-D-ribosyl)glycinamide + ADP + phosphate + H(+). It participates in purine metabolism; IMP biosynthesis via de novo pathway; N(2)-formyl-N(1)-(5-phospho-D-ribosyl)glycinamide from N(1)-(5-phospho-D-ribosyl)glycinamide (formate route): step 1/1. Functionally, involved in the de novo purine biosynthesis. Catalyzes the transfer of formate to 5-phospho-ribosyl-glycinamide (GAR), producing 5-phospho-ribosyl-N-formylglycinamide (FGAR). Formate is provided by PurU via hydrolysis of 10-formyl-tetrahydrofolate. This chain is Formate-dependent phosphoribosylglycinamide formyltransferase, found in Janthinobacterium sp. (strain Marseille) (Minibacterium massiliensis).